Here is a 283-residue protein sequence, read N- to C-terminus: Probable voltage-dependent anion-selective channel (283 aa).

Belongs to the eukaryotic mitochondrial porin family.

It localises to the mitochondrion outer membrane. In terms of biological role, forms a channel through the cell membrane that allows diffusion of small hydrophilic molecules. Plays a role in maintaining mitochondrial morphology. This Caenorhabditis elegans protein is Probable voltage-dependent anion-selective channel.